A 218-amino-acid polypeptide reads, in one-letter code: Insulin-induced gene 2 protein (218 aa).

The Cytoplasmic segment spans residues 1-21; sequence MGETDNAPRGPPSFLPHKMNL. Residues 22 to 44 form a helical membrane-spanning segment; sequence LLRGLLLFLIGVFLALVLNLLQV. At 45–63 the chain is on the lumenal side; that stretch reads QRNVTLFPPDVLSSLFSSA. The helical transmembrane segment at 64-81 threads the bilayer; sequence WWVPLCCGTAAAAIGLLY. Over 82 to 96 the chain is Cytoplasmic; that stretch reads PCIDRHLGEPHKFKR. Residues 97-119 form a helical membrane-spanning segment; it reads EWSSVMRCVAVFVGINHASAKVD. Topologically, residues 120-122 are lumenal; it reads FAN. The chain crosses the membrane as a helical span at residues 123 to 141; the sequence is NTQLSLTLAALSIGLWWTF. The Cytoplasmic portion of the chain corresponds to 142-146; that stretch reads DRSRS. The helical transmembrane segment at 147 to 168 threads the bilayer; sequence GLGLGIGISFFATVVSQLLVYN. At 169 to 182 the chain is on the lumenal side; the sequence is GVYEYTAPDFLYVR. A helical membrane pass occupies residues 183 to 200; the sequence is SWLPCIFFAGGITMGNIG. Topologically, residues 201–218 are cytoplasmic; that stretch reads RQLEMYERLALVEKSHRD. The KxHxx motif lies at 212 to 218; that stretch reads VEKSHRD.

The protein belongs to the INSIG family. Interacts with scap; interaction is direct and only takes place in the presence of sterols; it prevents interaction between scap and the coat protein complex II (COPII). Associates with the SCAP-SREBP complex; association is mediated via its interaction with scap and only takes place in the presence of sterols.

The protein resides in the endoplasmic reticulum membrane. Its function is as follows. Oxysterol-binding protein that mediates feedback control of cholesterol synthesis by controlling both endoplasmic reticulum to Golgi transport of scap and degradation of hmgcr. Acts as a negative regulator of cholesterol biosynthesis by mediating the retention of the SCAP-SREBP complex in the endoplasmic reticulum, thereby blocking the processing of sterol regulatory element-binding proteins (SREBPs). Binds oxysterol, including 22-hydroxycholesterol, 24-hydroxycholesterol, 25-hydroxycholesterol and 27-hydroxycholesterol, regulating interaction with scap and retention of the SCAP-SREBP complex in the endoplasmic reticulum. In presence of oxysterol, interacts with scap, retaining the SCAP-SREBP complex in the endoplasmic reticulum, thereby preventing scap from escorting SREBPs to the Golgi. Sterol deprivation reduce oxysterol-binding, disrupting the interaction between insig2 and scap, thereby promoting Golgi transport of the SCAP-SREBP complex, followed by processing and nuclear translocation of SREBPs. Also regulates cholesterol synthesis by regulating degradation of hmgcr. This is Insulin-induced gene 2 protein from Xenopus tropicalis (Western clawed frog).